A 137-amino-acid chain; its full sequence is Large ribosomal subunit protein uL16c (137 aa).

It belongs to the universal ribosomal protein uL16 family. Part of the 50S ribosomal subunit.

It is found in the plastid. The sequence is that of Large ribosomal subunit protein uL16c from Cuscuta reflexa (Southern Asian dodder).